We begin with the raw amino-acid sequence, 127 residues long: MRGEGKNDNKTLGEVGEAIAVTFLKGLHFSILERNFRCKCGEIDIIARDGRTLVFVEVKTRKNTAFGVPQLAVTPFKQRQISKAALTWLAQKKMQDAAARFDVIAILQPDHAVPEIEHIKDAFDLAY.

Belongs to the UPF0102 family.

This chain is UPF0102 protein Geob_1494, found in Geotalea daltonii (strain DSM 22248 / JCM 15807 / FRC-32) (Geobacter daltonii).